Here is a 411-residue protein sequence, read N- to C-terminus: Adenylosuccinate synthetase (411 aa).

GTP-binding positions include 11-17 (GDEGKGK) and 39-41 (GHT). Asp-12 acts as the Proton acceptor in catalysis. Mg(2+)-binding residues include Asp-12 and Gly-39. IMP contacts are provided by residues 12 to 15 (DEGK), 37 to 40 (NAGH), Thr-121, Arg-135, Gln-215, Thr-230, and Arg-294. The active-site Proton donor is His-40. 290–296 (TTTKRPR) is a substrate binding site. GTP-binding positions include Arg-296, 322–324 (KLD), and 400–402 (STS).

It belongs to the adenylosuccinate synthetase family. Homodimer. The cofactor is Mg(2+).

Its subcellular location is the cytoplasm. The catalysed reaction is IMP + L-aspartate + GTP = N(6)-(1,2-dicarboxyethyl)-AMP + GDP + phosphate + 2 H(+). Its pathway is purine metabolism; AMP biosynthesis via de novo pathway; AMP from IMP: step 1/2. Its function is as follows. Plays an important role in the de novo pathway of purine nucleotide biosynthesis. Catalyzes the first committed step in the biosynthesis of AMP from IMP. In Helicobacter pylori (strain P12), this protein is Adenylosuccinate synthetase.